The sequence spans 121 residues: Ribonuclease P protein component (121 aa).

It belongs to the RnpA family. As to quaternary structure, consists of a catalytic RNA component (M1 or rnpB) and a protein subunit.

The enzyme catalyses Endonucleolytic cleavage of RNA, removing 5'-extranucleotides from tRNA precursor.. Its function is as follows. RNaseP catalyzes the removal of the 5'-leader sequence from pre-tRNA to produce the mature 5'-terminus. It can also cleave other RNA substrates such as 4.5S RNA. The protein component plays an auxiliary but essential role in vivo by binding to the 5'-leader sequence and broadening the substrate specificity of the ribozyme. In Oceanobacillus iheyensis (strain DSM 14371 / CIP 107618 / JCM 11309 / KCTC 3954 / HTE831), this protein is Ribonuclease P protein component.